Reading from the N-terminus, the 236-residue chain is uncharacterized protein (236 aa).

This sequence to E.coli YfjP and YkfA.

This is an uncharacterized protein from Escherichia coli (strain K12).